Consider the following 2352-residue polypeptide: Highly reducing polyketide synthase ZEA2 (2352 aa).

Residues 9-433 (PGPVAIVGLA…GTNGHVVLEA (425 aa)) enclose the Ketosynthase family 3 (KS3) domain. Residues Cys-181, His-316, and His-356 each act as for beta-ketoacyl synthase activity in the active site. The tract at residues 544 to 875 (FVFTGQGAQW…LATSLFLQGV (332 aa)) is malonyl-CoA:ACP transacylase (MAT) domain. Ser-634 acts as the For malonyltransferase activity in catalysis. The interval 923–1058 (RSIIGAPVPK…GLITIDYEGN (136 aa)) is N-terminal hotdog fold. Residues 923–1242 (RSIIGAPVPK…TSELEMDGAA (320 aa)) enclose the PKS/mFAS DH domain. Residues 925 to 1237 (IIGAPVPKMN…VIDFRTSELE (313 aa)) form a dehydratase (DH) domain region. His-955 functions as the Proton acceptor; for dehydratase activity in the catalytic mechanism. Residues 1086 to 1242 (PATYAKDRFY…TSELEMDGAA (157 aa)) form a C-terminal hotdog fold region. Asp-1152 serves as the catalytic Proton donor; for dehydratase activity. Residues 1643 to 1955 (GLLDTLYFVD…QGKHRGKIVL (313 aa)) are enoylreductase (ER) domain. The interval 1979–2159 (ATYLFVGGLG…VSVNLGIMRD (181 aa)) is catalytic ketoreductase (KRc) domain. The Carrier domain occupies 2269–2346 (KATEIITNAL…SFAGKLASTS (78 aa)). Ser-2306 carries the post-translational modification O-(pantetheine 4'-phosphoryl)serine.

The protein operates within mycotoxin biosynthesis. In terms of biological role, highly reducing polyketide synthase; part of the gene cluster that mediates the biosynthesis of zearalenone (ZEA), a nonsteroid estrogen that is a contaminant of cereal grains and causes estrogenic disorders in humans and animals. The ZEA backbone is synthesized from a single acetyl-CoA molecule and eight malonyl-CoA molecules. The reducing polyketide synthase ZEA2 is proposed to synthesize a reduced hexaketide intermediate by using different combinations of its reductive domains during each round of condensation. The hexaketide thioester is then transacylated to the non-reducing polyketide synthase ZEA1 and is further condensed with three malonyl-CoAs without reductive tailoring to yield a mixed reduced/unreduced nonaketide. ZEA1 must be able to interact with ZEA2 to facilitate starter-unit acyltransfer and initiate polyketide biosynthesis. ZEA1 also mediates the required C2-C7 cyclization to form the resorcylate core and catalyzes the formation of the macrolactone. ZEB1 is then responsible for the chemical conversion of beta-zearalenonol (beta-ZOL) to ZEA in the biosynthetic pathway. This is Highly reducing polyketide synthase ZEA2 from Gibberella zeae (strain ATCC MYA-4620 / CBS 123657 / FGSC 9075 / NRRL 31084 / PH-1) (Wheat head blight fungus).